A 382-amino-acid polypeptide reads, in one-letter code: Alkanesulfonate monooxygenase (382 aa).

The protein belongs to the SsuD family. In terms of assembly, homotetramer.

The enzyme catalyses an alkanesulfonate + FMNH2 + O2 = an aldehyde + FMN + sulfite + H2O + 2 H(+). In terms of biological role, catalyzes the desulfonation of aliphatic sulfonates. The sequence is that of Alkanesulfonate monooxygenase from Buttiauxella sp. (strain PNBS).